Consider the following 697-residue polypeptide: Potassium-transporting ATPase ATP-binding subunit (697 aa).

4 helical membrane passes run Pro-55–Ser-75, Ser-79–Ala-99, Leu-245–Phe-265, and Val-271–Ile-291. Asp-324 serves as the catalytic 4-aspartylphosphate intermediate. ATP-binding positions include Asp-361, Glu-365, Phe-393–Ser-400, and Lys-412. Residues Asp-535 and Asp-539 each coordinate Mg(2+). A run of 3 helical transmembrane segments spans residues Phe-605–Met-625, Ala-633–Met-653, and Gly-677–Ile-697.

Belongs to the cation transport ATPase (P-type) (TC 3.A.3) family. Type IA subfamily. In terms of assembly, the system is composed of three essential subunits: KdpA, KdpB and KdpC.

The protein resides in the cell membrane. It catalyses the reaction K(+)(out) + ATP + H2O = K(+)(in) + ADP + phosphate + H(+). Part of the high-affinity ATP-driven potassium transport (or Kdp) system, which catalyzes the hydrolysis of ATP coupled with the electrogenic transport of potassium into the cytoplasm. This subunit is responsible for energy coupling to the transport system and for the release of the potassium ions to the cytoplasm. The chain is Potassium-transporting ATPase ATP-binding subunit from Bacillus anthracis (strain CDC 684 / NRRL 3495).